A 1547-amino-acid chain; its full sequence is ABC multidrug transporter atrF (1547 aa).

Disordered stretches follow at residues 1-66 (MADG…RRGA) and 85-123 (TRSV…IDGD). Positions 10–19 (SATSTTMETN) are enriched in polar residues. Residues 36 to 47 (SSSMTATSSELS) show a composition bias toward low complexity. The span at 51 to 66 (RWGERDQGEPVSRRGA) shows a compositional bias: basic and acidic residues. Over residues 111–123 (KAIDEEDSTIDGD) the composition is skewed to acidic residues. Residues 197 to 439 (IPQLRFGKQP…FVNLGFHCPE (243 aa)) form the ABC transporter 1 domain. N-linked (GlcNAc...) asparagine glycosylation is found at N299 and N363. Helical transmembrane passes span 552–572 (LYTK…LFYG), 586–606 (ALFF…MPAV), 635–655 (FPAI…MTGL), 657–677 (VTAS…FSIT), 698–718 (GIAL…QGLI), 722–742 (IWFG…AVLT), and 804–824 (FGVV…AAEF). An ABC transporter 2 domain is found at 892-1130 (FTWSNVEYTV…DVIKYFADRG (239 aa)). N-linked (GlcNAc...) asparagine glycosylation is present at N905. Residue 928-935 (GASGAGKT) coordinates ATP. 2 N-linked (GlcNAc...) asparagine glycosylation sites follow: N980 and N999. A run of 8 helical transmembrane segments spans residues 1230–1250 (FVSV…GNSI), 1260–1280 (IFLI…KFYI), 1309–1329 (IPMA…PVGF), 1334–1354 (STAG…SSWG), 1356–1376 (WICA…FFFV), 1397–1417 (YWMY…SSIF), 1491–1511 (CFGI…FFIY), and 1520–1540 (FGMG…KGVF).

This sequence belongs to the ABC transporter superfamily. ABCG family. PDR (TC 3.A.1.205) subfamily.

The protein localises to the cell membrane. It catalyses the reaction voriconazole(in) + ATP + H2O = voriconazole(out) + ADP + phosphate + H(+). The catalysed reaction is fluconazole(in) + ATP + H2O = fluconazole(out) + ADP + phosphate + H(+). Pleiotropic ABC efflux transporter involved in the basal level of azole susceptibility. Confers resistance to fluconazole and voriconazole. This Aspergillus fumigatus (strain ATCC MYA-4609 / CBS 101355 / FGSC A1100 / Af293) (Neosartorya fumigata) protein is ABC multidrug transporter atrF.